A 231-amino-acid chain; its full sequence is Probable caffeoyl-CoA O-methyltransferase 2 (231 aa).

Residues Thr53, Asp75, 77-78, Ser83, Asp101, Ala130, Asp152, Asp154, and Tyr161 each bind S-adenosyl-L-methionine; that span reads GV. A divalent metal cation is bound at residue Asp152. 2 residues coordinate a divalent metal cation: Asp178 and Asn179.

The protein belongs to the class I-like SAM-binding methyltransferase superfamily. Cation-dependent O-methyltransferase family. CCoAMT subfamily.

The catalysed reaction is (E)-caffeoyl-CoA + S-adenosyl-L-methionine = (E)-feruloyl-CoA + S-adenosyl-L-homocysteine + H(+). This Dictyostelium discoideum (Social amoeba) protein is Probable caffeoyl-CoA O-methyltransferase 2 (omt6).